The sequence spans 246 residues: Bis(5'-nucleosyl)-tetraphosphatase PrpE [asymmetrical] (246 aa).

It belongs to the PrpE family. It depends on Ni(2+) as a cofactor.

It catalyses the reaction P(1),P(4)-bis(5'-guanosyl) tetraphosphate + H2O = GMP + GTP + 2 H(+). Asymmetrically hydrolyzes Ap4p to yield AMP and ATP. This Bacillus cereus (strain AH187) protein is Bis(5'-nucleosyl)-tetraphosphatase PrpE [asymmetrical].